We begin with the raw amino-acid sequence, 87 residues long: Small ribosomal subunit protein uS17 (87 aa).

This sequence belongs to the universal ribosomal protein uS17 family. Part of the 30S ribosomal subunit.

Its function is as follows. One of the primary rRNA binding proteins, it binds specifically to the 5'-end of 16S ribosomal RNA. This chain is Small ribosomal subunit protein uS17, found in Hydrogenovibrio crunogenus (strain DSM 25203 / XCL-2) (Thiomicrospira crunogena).